The primary structure comprises 634 residues: 1-deoxy-D-xylulose-5-phosphate synthase (634 aa).

Residues histidine 74 and 115 to 117 each bind thiamine diphosphate; that span reads AHS. Aspartate 146 serves as a coordination point for Mg(2+). Thiamine diphosphate-binding positions include 147 to 148, asparagine 176, tyrosine 283, and glutamate 365; that span reads GA. A Mg(2+)-binding site is contributed by asparagine 176.

Belongs to the transketolase family. DXPS subfamily. In terms of assembly, homodimer. The cofactor is Mg(2+). Thiamine diphosphate is required as a cofactor.

It carries out the reaction D-glyceraldehyde 3-phosphate + pyruvate + H(+) = 1-deoxy-D-xylulose 5-phosphate + CO2. Its pathway is metabolic intermediate biosynthesis; 1-deoxy-D-xylulose 5-phosphate biosynthesis; 1-deoxy-D-xylulose 5-phosphate from D-glyceraldehyde 3-phosphate and pyruvate: step 1/1. Catalyzes the acyloin condensation reaction between C atoms 2 and 3 of pyruvate and glyceraldehyde 3-phosphate to yield 1-deoxy-D-xylulose-5-phosphate (DXP). The polypeptide is 1-deoxy-D-xylulose-5-phosphate synthase (Burkholderia pseudomallei (strain 668)).